The sequence spans 289 residues: tRNA pseudouridine synthase B (289 aa).

Asp-55 functions as the Nucleophile in the catalytic mechanism. A disordered region spans residues 243 to 289 (PGGVLAQHEREGSRALDSAAGNAEHDREEARIADNNREDRSRQHADR). Residues 265-289 (AEHDREEARIADNNREDRSRQHADR) show a composition bias toward basic and acidic residues.

This sequence belongs to the pseudouridine synthase TruB family. Type 1 subfamily.

The enzyme catalyses uridine(55) in tRNA = pseudouridine(55) in tRNA. Its function is as follows. Responsible for synthesis of pseudouridine from uracil-55 in the psi GC loop of transfer RNAs. In Chlorobium luteolum (strain DSM 273 / BCRC 81028 / 2530) (Pelodictyon luteolum), this protein is tRNA pseudouridine synthase B.